The primary structure comprises 91 residues: Sec-independent protein translocase protein TatA (91 aa).

The helical transmembrane segment at 3 to 23 (FFGIGLPEMLVILAIALLVFG) threads the bilayer. The disordered stretch occupies residues 57 to 91 (DRTPATPAEATVEPPVLDSAPTEAVTVEKQTETQV). The segment covering 59-72 (TPATPAEATVEPPV) has biased composition (low complexity).

The protein belongs to the TatA/E family. Forms a complex with TatC.

The protein localises to the cell inner membrane. Its function is as follows. Part of the twin-arginine translocation (Tat) system that transports large folded proteins containing a characteristic twin-arginine motif in their signal peptide across membranes. TatA could form the protein-conducting channel of the Tat system. The polypeptide is Sec-independent protein translocase protein TatA (Synechococcus elongatus (strain ATCC 33912 / PCC 7942 / FACHB-805) (Anacystis nidulans R2)).